A 359-amino-acid chain; its full sequence is Src kinase-associated phosphoprotein 2 (359 aa).

S5, S6, and S9 each carry phosphoserine. The interval 67–88 (GDAEDGEEYDDPFAGPPDTISL) is disordered. Y75 is subject to Phosphotyrosine. Residues S87 and S90 each carry the phosphoserine modification. The PH domain occupies 116–219 (FVLKAGYLEK…WVQQLKFVLQ (104 aa)). Y151 and Y197 each carry phosphotyrosine. S223 is subject to Phosphoserine. Phosphotyrosine is present on Y261. S286 is subject to Phosphoserine. An SH3 domain is found at 297–358 (DYANFYQGLW…PKAYIMEMYD (62 aa)).

Belongs to the SKAP family. Interacts with FYB1, which is required for SKAP2 protein stability. Interacts with PTPNS1. Part of a complex consisting of SKAP2, FYB1 and PTPNS1. Part of a complex consisting of SKAP2, FYB1 and LILRB3. Interacts with LAT, GRB2, PTK2B, and PRAM1. May interact with actin. May interact with FYN, HCK and LYN. Interacts with FASLG.

It localises to the cytoplasm. Its function is as follows. May be involved in B-cell and macrophage adhesion processes. In B-cells, may act by coupling the B-cell receptor (BCR) to integrin activation. May play a role in src signaling pathway. This chain is Src kinase-associated phosphoprotein 2 (SKAP2), found in Pongo abelii (Sumatran orangutan).